A 302-amino-acid chain; its full sequence is Myeloid-associated differentiation marker-like protein 2 (302 aa).

MARVEL domains lie at 13 to 149 (AIWS…AKPG) and 154 to 298 (YMAT…RLRI). 7 helical membrane-spanning segments follow: residues 45-65 (AYGT…ILIV), 87-107 (AYAM…PMYF), 124-144 (LAVS…VFLT), 158-178 (ASGL…GALA), 191-211 (WCVA…ILNI), 225-245 (FVVI…VIWP), and 273-293 (LAVT…LIYT).

The protein belongs to the MAL family.

It localises to the membrane. The sequence is that of Myeloid-associated differentiation marker-like protein 2 (myadml2) from Xenopus laevis (African clawed frog).